Consider the following 150-residue polypeptide: Ubiquitin-conjugating enzyme E2 3 (150 aa).

Residues 4-150 enclose the UBC core domain; that stretch reads PAKKRLMWDF…VIEIVEQSYV (147 aa). The active-site Glycyl thioester intermediate is the Cys-88.

The protein belongs to the ubiquitin-conjugating enzyme family. As to expression, expressed in all tissues examined. Lower levels found in leaves.

It catalyses the reaction S-ubiquitinyl-[E1 ubiquitin-activating enzyme]-L-cysteine + [E2 ubiquitin-conjugating enzyme]-L-cysteine = [E1 ubiquitin-activating enzyme]-L-cysteine + S-ubiquitinyl-[E2 ubiquitin-conjugating enzyme]-L-cysteine.. The protein operates within protein modification; protein ubiquitination. Its function is as follows. Accepts the ubiquitin from the E1 complex and catalyzes its covalent attachment to other proteins. This chain is Ubiquitin-conjugating enzyme E2 3 (UBC3), found in Arabidopsis thaliana (Mouse-ear cress).